Reading from the N-terminus, the 134-residue chain is ATP synthase epsilon chain (134 aa).

Positions 94–104 (AKLAKSRAESH) are enriched in basic and acidic residues. The disordered stretch occupies residues 94–115 (AKLAKSRAESHLEDDDDNTDIN).

It belongs to the ATPase epsilon chain family. As to quaternary structure, F-type ATPases have 2 components, CF(1) - the catalytic core - and CF(0) - the membrane proton channel. CF(1) has five subunits: alpha(3), beta(3), gamma(1), delta(1), epsilon(1). CF(0) has three main subunits: a, b and c.

The protein localises to the cell membrane. Its function is as follows. Produces ATP from ADP in the presence of a proton gradient across the membrane. The polypeptide is ATP synthase epsilon chain (Staphylococcus epidermidis (strain ATCC 12228 / FDA PCI 1200)).